Consider the following 1367-residue polypeptide: Histone acetyltransferase HAC2 (1367 aa).

The interval 110–151 is disordered; it reads TSSIPGSSGSASETNSGSDITKQDFKNDSPSDSKKVQGSSTS. A compositionally biased stretch (low complexity) spans 111–127; the sequence is SSIPGSSGSASETNSGS. Positions 130–144 are enriched in basic and acidic residues; sequence TKQDFKNDSPSDSKK. Repeat copies occupy residues 188-200, 223-235, 251-263, 286-298, 314-326, 349-361, 377-389, 418-430, 432-444, 459-471, 473-485, and 500-512. The tract at residues 188–512 is 12 X 13 AA approximate repeats; the sequence is KLGTVVDIVE…IGVDIVEPMK (325 aa). Residues 688–765 form a PHD-type zinc finger; that stretch reads HQICSPCHSR…EYICPTCLLE (78 aa). The 434-residue stretch at 780–1213 folds into the CBP/p300-type HAT domain; it reads DSGAKDLPET…ILHHLHTSNK (434 aa). Residues 903–905, 922–923, and tryptophan 978 contribute to the acetyl-CoA site; these read LDS and RT. The segment at 1094 to 1157 adopts a ZZ-type 1; degenerate zinc-finger fold; sequence ELNYSCTRCS…QLSKVQVNGV (64 aa). Positions 1099, 1102, 1123, 1126, 1225, 1228, 1240, 1243, 1249, 1252, 1261, and 1263 each coordinate Zn(2+). The ZZ-type 2 zinc-finger motif lies at 1220 to 1273; sequence SSSLTCTACKKDVSTTIYFPCLLCPDYRACTGCYTKNRTLRHLHIFPTLPSANR. The TAZ-type zinc-finger motif lies at 1274–1359; the sequence is APSRTVMVLE…NCPVPQCRDR (86 aa).

As to expression, rosette leaves, stems and flowers.

It is found in the nucleus. The catalysed reaction is L-lysyl-[protein] + acetyl-CoA = N(6)-acetyl-L-lysyl-[protein] + CoA + H(+). Functionally, acetyltransferase enzyme. Acetylates histones, giving a specific tag for transcriptional activation. No acetyltransferase activity found in vitro. The polypeptide is Histone acetyltransferase HAC2 (HAC2) (Arabidopsis thaliana (Mouse-ear cress)).